The following is a 139-amino-acid chain: Hydrogenase maturation factor HypA (139 aa).

Ni(2+) is bound by residues methionine 1 and histidine 2. Zn(2+)-binding residues include cysteine 73 and cysteine 76. Histidine 98 lines the Ni(2+) pocket. 2 residues coordinate Zn(2+): cysteine 110 and cysteine 113.

The protein belongs to the HypA/HybF family. Monomer and homodimer. Could also form hexamers. Forms a complex with HypB.

Its function is as follows. Involved in the maturation of [NiFe] hydrogenases. Required for nickel insertion into the metal center of the hydrogenase. The protein is Hydrogenase maturation factor HypA of Thermococcus kodakarensis (strain ATCC BAA-918 / JCM 12380 / KOD1) (Pyrococcus kodakaraensis (strain KOD1)).